Reading from the N-terminus, the 723-residue chain is Host cell factor 2 (723 aa).

4 Kelch repeats span residues 34 to 79, 83 to 130, 207 to 255, and 257 to 305; these read LMII…GFVC, RILV…RLGH, KMYV…VIGN, and MYIF…DSQE. 3 consecutive Fibronectin type-III domains span residues 357 to 436, 516 to 606, and 608 to 720; these read PPAP…ANCT, TPSN…TCIP, and FPGA…SKKA. A disordered region spans residues 398-472; the sequence is AASPDASAAP…VALHSPLAPN (75 aa). Over residues 419-433 the composition is skewed to polar residues; the sequence is QGSNSILHNSVSDPA.

As to quaternary structure, binds KMT2A/MLL1. Component of the MLL1/MLL complex, at least composed of KMT2A/MLL1, ASH2L, RBBP5, DPY30, WDR5, MEN1, HCFC1 and HCFC2. Interacts with TASOR.

The protein localises to the cytoplasm. It localises to the nucleus. This Rattus norvegicus (Rat) protein is Host cell factor 2 (Hcfc2).